Here is a 676-residue protein sequence, read N- to C-terminus: Protein kinase C delta type (676 aa).

The C2 domain occupies 1 to 106 (MAPFLRIAFN…KNNGKAEFWL (106 aa)). T43 and T50 each carry phosphothreonine. Residue Y64 is modified to Phosphotyrosine. S130 carries the phosphoserine modification. T141 carries the post-translational modification Phosphothreonine. At Y155 the chain carries Phosphotyrosine. The Phorbol-ester/DAG-type 1 zinc finger occupies 158–208 (NHEFIATFFGQPTFCSVCKDFVWGLNKQGYKCRQCNAAIHKKCIDKIIGRC). T218 is subject to Phosphothreonine. Residues 230–280 (PHRFKVHNYMSPTFCDHCGSLLWGLVKQGLKCEDCGMNVHHKCREKVANLC) form a Phorbol-ester/DAG-type 2 zinc finger. Phosphoserine; by autocatalysis is present on residues S299, S302, and S304. S307 carries the phosphoserine modification. Y313 bears the Phosphotyrosine mark. A Phosphotyrosine; by SRC modification is found at Y334. The region spanning 349–603 (FIFHKVLGKG…TGNIKIHPFF (255 aa)) is the Protein kinase domain. 355 to 363 (LGKGSFGKV) contributes to the ATP binding site. Y374 is subject to Phosphotyrosine. Residue K378 coordinates ATP. T451 carries the phosphothreonine modification. D473 functions as the Proton acceptor in the catalytic mechanism. Phosphoserine is present on residues S503 and S506. Residue T507 is modified to Phosphothreonine; by autocatalysis. Y567 bears the Phosphotyrosine mark. The AGC-kinase C-terminal domain maps to 604 to 675 (KTINWTLLEK…VNPKFEHLLE (72 aa)). A phosphoserine mark is found at S645, S654, S658, and S664.

Belongs to the protein kinase superfamily. AGC Ser/Thr protein kinase family. PKC subfamily. In terms of assembly, interacts with PDPK1 (via N-terminal region). Interacts with RAD9A. Interacts with CDCP1. Interacts with MUC1. Interacts with VASP. Interacts with CAVIN3. Interacts with PRKD2 (via N-terminus and zing-finger domain 1 and 2) in response to oxidative stress; the interaction is independent of PRKD2 tyrosine phosphorylation. Interacts with PLSC3; interaction is enhanced by UV irradiation. Interacts with PRKCH upstream open reading frame 2; the interaction leads to inhibition of kinase activity. Autophosphorylated and/or phosphorylated at Thr-507, within the activation loop; phosphorylation at Thr-507 is not a prerequisite for enzymatic activity. Autophosphorylated at Ser-299, Ser-302 and Ser-304. Upon TNFSF10/TRAIL treatment, phosphorylated at Tyr-155; phosphorylation is required for its translocation to the endoplasmic reticulum and cleavage by caspase-3. Phosphorylated at Tyr-313, Tyr-334 and Tyr-567; phosphorylation of Tyr-313 and Tyr-567 following thrombin or zymosan stimulation potentiates its kinase activity. Phosphorylated by protein kinase PDPK1; phosphorylation is inhibited by the apoptotic C-terminal cleavage product of PKN2. Phosphorylated at Tyr-313 through a SYK and SRC mechanism downstream of C-type lectin receptors activation, promoting its activation. Post-translationally, proteolytically cleaved into a catalytic subunit and a regulatory subunit by caspase-3 during apoptosis which results in kinase activation.

The protein localises to the cytoplasm. It localises to the perinuclear region. The protein resides in the nucleus. It is found in the cell membrane. Its subcellular location is the mitochondrion. The protein localises to the endomembrane system. The catalysed reaction is L-seryl-[protein] + ATP = O-phospho-L-seryl-[protein] + ADP + H(+). The enzyme catalyses L-threonyl-[protein] + ATP = O-phospho-L-threonyl-[protein] + ADP + H(+). It catalyses the reaction L-tyrosyl-[protein] + ATP = O-phospho-L-tyrosyl-[protein] + ADP + H(+). Novel PKCs (PRKCD, PRKCE, PRKCH and PRKCQ) are calcium-insensitive, but activated by diacylglycerol (DAG) and phosphatidylserine. Three specific sites; Thr-507 (activation loop of the kinase domain), Ser-645 (turn motif) and Ser-664 (hydrophobic region), need to be phosphorylated for its full activation. Activated by caspase-3 (CASP3) cleavage during apoptosis. After cleavage, the pseudosubstrate motif in the regulatory subunit is released from the substrate recognition site of the catalytic subunit, which enables PRKCD to become constitutively activated. The catalytic subunit which displays properties of a sphingosine-dependent protein kinase is activated by D-erythro-sphingosine (Sph) or N,N-dimethyl-D-erythrosphingosine (DMS) or N,N,N-trimethyl-D-erythrosphingosine (TMS), but not by ceramide or Sph-1-P and is strongly inhibited by phosphatidylserine. Inhibited by PRKCH upstream open reading frame 2. Its function is as follows. Calcium-independent, phospholipid- and diacylglycerol (DAG)-dependent serine/threonine-protein kinase that plays contrasting roles in cell death and cell survival by functioning as a pro-apoptotic protein during DNA damage-induced apoptosis, but acting as an anti-apoptotic protein during cytokine receptor-initiated cell death, is involved in tumor suppression as well as survival of several cancers, is required for oxygen radical production by NADPH oxidase and acts as positive or negative regulator in platelet functional responses. Negatively regulates B cell proliferation and also has an important function in self-antigen induced B cell tolerance induction. Upon DNA damage, activates the promoter of the death-promoting transcription factor BCLAF1/Btf to trigger BCLAF1-mediated p53/TP53 gene transcription and apoptosis. In response to oxidative stress, interact with and activate CHUK/IKKA in the nucleus, causing the phosphorylation of p53/TP53. In the case of ER stress or DNA damage-induced apoptosis, can form a complex with the tyrosine-protein kinase ABL1 which trigger apoptosis independently of p53/TP53. In cytosol can trigger apoptosis by activating MAPK11 or MAPK14, inhibiting AKT1 and decreasing the level of X-linked inhibitor of apoptosis protein (XIAP), whereas in nucleus induces apoptosis via the activation of MAPK8 or MAPK9. Upon ionizing radiation treatment, is required for the activation of the apoptosis regulators BAX and BAK, which trigger the mitochondrial cell death pathway. Can phosphorylate MCL1 and target it for degradation which is sufficient to trigger for BAX activation and apoptosis. Is required for the control of cell cycle progression both at G1/S and G2/M phases. Mediates phorbol 12-myristate 13-acetate (PMA)-induced inhibition of cell cycle progression at G1/S phase by up-regulating the CDK inhibitor CDKN1A/p21 and inhibiting the cyclin CCNA2 promoter activity. In response to UV irradiation can phosphorylate CDK1, which is important for the G2/M DNA damage checkpoint activation. Can protect glioma cells from the apoptosis induced by TNFSF10/TRAIL, probably by inducing increased phosphorylation and subsequent activation of AKT1. Is highly expressed in a number of cancer cells and promotes cell survival and resistance against chemotherapeutic drugs by inducing cyclin D1 (CCND1) and hyperphosphorylation of RB1, and via several pro-survival pathways, including NF-kappa-B, AKT1 and MAPK1/3 (ERK1/2). Involved in antifungal immunity by mediating phosphorylation and activation of CARD9 downstream of C-type lectin receptors activation, promoting interaction between CARD9 and BCL10, followed by activation of NF-kappa-B and MAP kinase p38 pathways. Can also act as tumor suppressor upon mitogenic stimulation with PMA or TPA. In N-formyl-methionyl-leucyl-phenylalanine (fMLP)-treated cells, is required for NCF1 (p47-phox) phosphorylation and activation of NADPH oxidase activity, and regulates TNF-elicited superoxide anion production in neutrophils, by direct phosphorylation and activation of NCF1 or indirectly through MAPK1/3 (ERK1/2) signaling pathways. May also play a role in the regulation of NADPH oxidase activity in eosinophil after stimulation with IL5, leukotriene B4 or PMA. In collagen-induced platelet aggregation, acts a negative regulator of filopodia formation and actin polymerization by interacting with and negatively regulating VASP phosphorylation. Downstream of PAR1, PAR4 and CD36/GP4 receptors, regulates differentially platelet dense granule secretion; acts as a positive regulator in PAR-mediated granule secretion, whereas it negatively regulates CD36/GP4-mediated granule release. Phosphorylates MUC1 in the C-terminal and regulates the interaction between MUC1 and beta-catenin. The catalytic subunit phosphorylates 14-3-3 proteins (YWHAB, YWHAZ and YWHAH) in a sphingosine-dependent fashion. Phosphorylates ELAVL1 in response to angiotensin-2 treatment. Phosphorylates mitochondrial phospholipid scramblase 3 (PLSCR3), resulting in increased cardiolipin expression on the mitochondrial outer membrane which facilitates apoptosis. Phosphorylates SMPD1 which induces SMPD1 secretion. In Homo sapiens (Human), this protein is Protein kinase C delta type.